Reading from the N-terminus, the 134-residue chain is Small ribosomal subunit protein uS8c (134 aa).

This sequence belongs to the universal ribosomal protein uS8 family. Part of the 30S ribosomal subunit.

It localises to the plastid. Its subcellular location is the chloroplast. Its function is as follows. One of the primary rRNA binding proteins, it binds directly to 16S rRNA central domain where it helps coordinate assembly of the platform of the 30S subunit. The chain is Small ribosomal subunit protein uS8c (rps8) from Phaseolus angularis (Azuki bean).